A 439-amino-acid chain; its full sequence is MAMLNDTIYALSSGAPPSGVSVIRVSGTLTRDILFQLVGSVPAARTASYRTIRTRYDQPVDSGLVLFFPGPNSFTGEDAAELQIHGSKAVLAALFRELGDIPGVRMAMEGEFSRRAFENGKLDLVEVEGLADLIGAETEMQRRLAVEQSAGGVSAIYDSWAERLTRARALIEAELDFPDEDDVPGSVSDMVWADMARLRHDIALHLEAASAGEIIRDGFKVVIAGAPNAGKSSLMNALAKREVAIVTDIAGTTRDVLHVDLDIDGYLVKLYDTAGLREAEDRVEIEGVRRARVALRDADLVLLLVDMSNPIIPADLEQALPHVTVGTKKDLIETASDRYDLQISTTTGEGLPELRDLIGRVVKERYGGQSLAIPSRQRHKDSLAKCLAALDAAISQGSANLELRTEQLRLAAEYLGRITGRVDVEQLLDVIFSEFCIGK.

The (6S)-5-formyl-5,6,7,8-tetrahydrofolate site is built by Arg24, Glu81, and Lys121. The TrmE-type G domain occupies 218 to 363 (GFKVVIAGAP…LRDLIGRVVK (146 aa)). Asn228 serves as a coordination point for K(+). GTP contacts are provided by residues 228 to 233 (NAGKSS), 247 to 253 (TDIAGTT), and 272 to 275 (DTAG). Ser232 is a binding site for Mg(2+). K(+)-binding residues include Thr247, Ile249, and Thr252. Thr253 is a Mg(2+) binding site. Lys439 contacts (6S)-5-formyl-5,6,7,8-tetrahydrofolate.

This sequence belongs to the TRAFAC class TrmE-Era-EngA-EngB-Septin-like GTPase superfamily. TrmE GTPase family. As to quaternary structure, homodimer. Heterotetramer of two MnmE and two MnmG subunits. Requires K(+) as cofactor.

Its subcellular location is the cytoplasm. Its function is as follows. Exhibits a very high intrinsic GTPase hydrolysis rate. Involved in the addition of a carboxymethylaminomethyl (cmnm) group at the wobble position (U34) of certain tRNAs, forming tRNA-cmnm(5)s(2)U34. This Rhizobium etli (strain CIAT 652) protein is tRNA modification GTPase MnmE.